Reading from the N-terminus, the 311-residue chain is MVNPLYQKHIISINDLSREDLELTLRVAASLKAKPQPELLKHKVIASCFFEASTRTRLSFETAMHRLGASVVGFADSNNTSLGKKGETLADTISVISQYVDAIVMRHPQEGASRLATEFSGGIPVLNAGDGANQHPTQTLLDLFTIQETQGRLNNINIAMVGDLKYGRTVHSLTQALAKFEGNRFYFIAPDALAMPDYILSMLKEKNIAYSLHNSIDEVVGELDILYMTRVQKERLDPSEYINIKSQFVLRAADLHSARPNLKVLHPLPRVDEITIDVDATPYAYYFQQAGNGIYARQALLALVLNRELVL.

Carbamoyl phosphate is bound by residues R55 and T56. Residue K85 participates in L-aspartate binding. Positions 106, 135, and 138 each coordinate carbamoyl phosphate. Positions 168 and 230 each coordinate L-aspartate. Carbamoyl phosphate contacts are provided by L268 and P269.

It belongs to the aspartate/ornithine carbamoyltransferase superfamily. ATCase family. As to quaternary structure, heterododecamer (2C3:3R2) of six catalytic PyrB chains organized as two trimers (C3), and six regulatory PyrI chains organized as three dimers (R2).

The catalysed reaction is carbamoyl phosphate + L-aspartate = N-carbamoyl-L-aspartate + phosphate + H(+). Its pathway is pyrimidine metabolism; UMP biosynthesis via de novo pathway; (S)-dihydroorotate from bicarbonate: step 2/3. Functionally, catalyzes the condensation of carbamoyl phosphate and aspartate to form carbamoyl aspartate and inorganic phosphate, the committed step in the de novo pyrimidine nucleotide biosynthesis pathway. The polypeptide is Aspartate carbamoyltransferase catalytic subunit (Pectobacterium carotovorum subsp. carotovorum (strain PC1)).